A 148-amino-acid polypeptide reads, in one-letter code: Large ribosomal subunit protein bL9 (148 aa).

This sequence belongs to the bacterial ribosomal protein bL9 family.

Its function is as follows. Binds to the 23S rRNA. The polypeptide is Large ribosomal subunit protein bL9 (Bifidobacterium longum (strain DJO10A)).